A 352-amino-acid chain; its full sequence is 7,8-didemethyl-8-hydroxy-5-deazariboflavin synthase (352 aa).

The Radical SAM core domain occupies 35-275 (ITFSKNAFIP…EGISIQVPPN (241 aa)). The [4Fe-4S] cluster site is built by Cys-49, Cys-53, and Cys-56.

This sequence belongs to the radical SAM superfamily. CofG family. As to quaternary structure, consists of two subunits, CofG and CofH. [4Fe-4S] cluster serves as cofactor.

The enzyme catalyses 5-amino-5-(4-hydroxybenzyl)-6-(D-ribitylimino)-5,6-dihydrouracil + S-adenosyl-L-methionine = 7,8-didemethyl-8-hydroxy-5-deazariboflavin + 5'-deoxyadenosine + L-methionine + NH4(+) + H(+). The protein operates within cofactor biosynthesis; coenzyme F0 biosynthesis. Functionally, catalyzes the radical-mediated synthesis of 7,8-didemethyl-8-hydroxy-5-deazariboflavin from 5-amino-5-(4-hydroxybenzyl)-6-(D-ribitylimino)-5,6-dihydrouracil. The chain is 7,8-didemethyl-8-hydroxy-5-deazariboflavin synthase from Methanococcus maripaludis (strain C5 / ATCC BAA-1333).